We begin with the raw amino-acid sequence, 431 residues long: Enolase (431 aa).

Gln-167 lines the (2R)-2-phosphoglycerate pocket. Glu-209 acts as the Proton donor in catalysis. Mg(2+) is bound by residues Asp-246, Glu-290, and Asp-317. (2R)-2-phosphoglycerate-binding residues include Lys-342, Arg-371, Ser-372, and Lys-393. Residue Lys-342 is the Proton acceptor of the active site.

Belongs to the enolase family. Component of the RNA degradosome, a multiprotein complex involved in RNA processing and mRNA degradation. The cofactor is Mg(2+).

It is found in the cytoplasm. It localises to the secreted. The protein resides in the cell surface. The enzyme catalyses (2R)-2-phosphoglycerate = phosphoenolpyruvate + H2O. It functions in the pathway carbohydrate degradation; glycolysis; pyruvate from D-glyceraldehyde 3-phosphate: step 4/5. Its function is as follows. Catalyzes the reversible conversion of 2-phosphoglycerate (2-PG) into phosphoenolpyruvate (PEP). It is essential for the degradation of carbohydrates via glycolysis. The polypeptide is Enolase (Yersinia pseudotuberculosis serotype O:1b (strain IP 31758)).